The chain runs to 249 residues: Isoamyl acetate-hydrolyzing esterase 1 homolog (249 aa).

S24 serves as the catalytic Nucleophile. K63 bears the N6-succinyllysine mark. The active-site Proton donor is the D197. The active-site Proton acceptor is the H200.

Belongs to the 'GDSL' lipolytic enzyme family. IAH1 subfamily.

Probable lipase. The chain is Isoamyl acetate-hydrolyzing esterase 1 homolog (Iah1) from Mus musculus (Mouse).